The chain runs to 285 residues: 2-dehydro-3-deoxyphosphooctonate aldolase (285 aa).

This sequence belongs to the KdsA family.

The protein localises to the cytoplasm. It catalyses the reaction D-arabinose 5-phosphate + phosphoenolpyruvate + H2O = 3-deoxy-alpha-D-manno-2-octulosonate-8-phosphate + phosphate. The protein operates within carbohydrate biosynthesis; 3-deoxy-D-manno-octulosonate biosynthesis; 3-deoxy-D-manno-octulosonate from D-ribulose 5-phosphate: step 2/3. Its pathway is bacterial outer membrane biogenesis; lipopolysaccharide biosynthesis. The protein is 2-dehydro-3-deoxyphosphooctonate aldolase of Acinetobacter baylyi (strain ATCC 33305 / BD413 / ADP1).